A 921-amino-acid polypeptide reads, in one-letter code: Sodium/calcium exchanger 2 (921 aa).

The N-terminal stretch at 1-20 is a signal peptide; the sequence is MAPLALVGVTLLLAAPPCSG. At 21 to 68 the chain is on the extracellular side; that stretch reads AATPTPSLPPPPANDSDTSTGGCQGSYRCQPGVLLPVWEPDDPSLGDK. The interval 22 to 42 is disordered; sequence ATPTPSLPPPPANDSDTSTGG. A glycan (N-linked (GlcNAc...) asparagine) is linked at Asn34. A helical membrane pass occupies residues 69 to 90; the sequence is AARAVVYFVAMVYMFLGVSIIA. The Cytoplasmic portion of the chain corresponds to 91–130; the sequence is DRFMAAIEVITSKEKEITITKANGETSVGTVRIWNETVSN. Residues 131-152 form a helical membrane-spanning segment; sequence LTLMALGSSAPEILLSVIEVCG. The stretch at 135-175 is one Alpha-1 repeat; the sequence is ALGSSAPEILLSVIEVCGHNFQAGELGPGTIVGSAAFNMFV. At 153-164 the chain is on the extracellular side; the sequence is HNFQAGELGPGT. A helical transmembrane segment spans residues 165 to 185; that stretch reads IVGSAAFNMFVVIAVCIYVIP. Topologically, residues 186–196 are cytoplasmic; that stretch reads AGESRKIKHLR. A helical membrane pass occupies residues 197 to 219; the sequence is VFFVTASWSIFAYVWLYLILAVF. Over 220–222 the chain is Extracellular; it reads SPG. The helical transmembrane segment at 223–246 threads the bilayer; the sequence is VVQVWEALLTLVFFPVCVVFAWMA. The Cytoplasmic portion of the chain corresponds to 247-720; the sequence is DKRLLFYKYV…DGSREERLPS (474 aa). Residues 248-267 form a putative calmodulin-binding region region; sequence KRLLFYKYVYKRYRTDPRSG. Calx-beta domains lie at 384-483 and 512-612; these read GAGE…VRLL and ATVT…IELG. 14 residues coordinate Ca(2+): Glu407, Asp443, Asp468, Asp469, Ile471, Glu473, Glu476, Asp518, Asp519, Asp520, Glu536, Asp598, Glu599, and Glu600. Ser622 is modified (phosphoserine). Glu665 is a Ca(2+) binding site. Residues 721 to 740 form a helical membrane-spanning segment; that stretch reads CFDYVMHFLTVFWKVLFACV. Residues 741–747 lie on the Extracellular side of the membrane; it reads PPTEYCH. The helical transmembrane segment at 748 to 770 threads the bilayer; that stretch reads GWACFGVSILVIGLLTALIGDLA. Residues 771–772 lie on the Cytoplasmic side of the membrane; the sequence is SH. Residues 773–791 traverse the membrane as a helical segment; the sequence is FGCTVGLKDSVNAVVFVAL. One copy of the Alpha-2 repeat lies at 790-826; it reads ALGTSIPDTFASKVAALQDQCADASIGNVTGSNAVNV. At 792-822 the chain is on the extracellular side; sequence GTSIPDTFASKVAALQDQCADASIGNVTGSN. Asn817 is a glycosylation site (N-linked (GlcNAc...) asparagine). The chain crosses the membrane as a helical span at residues 823 to 843; the sequence is AVNVFLGLGVAWSVAAVYWAV. The Cytoplasmic segment spans residues 844 to 854; it reads QGRPFEVRTGT. Residues 855–875 traverse the membrane as a helical segment; it reads LAFSVTLFTVFAFVGIAVLLY. The Extracellular portion of the chain corresponds to 876-892; it reads RRRPHIGGELGGPRGPK. Residues 893-909 traverse the membrane as a helical segment; that stretch reads LATTALFLGLWLLYILF. Topologically, residues 910–921 are cytoplasmic; it reads ASLEAYCHIRGF.

This sequence belongs to the Ca(2+):cation antiporter (CaCA) (TC 2.A.19) family. SLC8 subfamily.

The protein localises to the cell membrane. The protein resides in the basolateral cell membrane. It is found in the perikaryon. Its subcellular location is the cell projection. It localises to the dendrite. The protein localises to the dendritic spine. The enzyme catalyses Ca(2+)(in) + 3 Na(+)(out) = Ca(2+)(out) + 3 Na(+)(in). With respect to regulation, calcium transport is down-regulated by Na(+) and stimulated by Ca(2+). Mediates the electrogenic exchange of Ca(2+) against Na(+) ions across the cell membrane, and thereby contributes to the regulation of cytoplasmic Ca(2+) levels and Ca(2+)-dependent cellular processes. Contributes to cellular Ca(2+) homeostasis in excitable cells. Contributes to the rapid decrease of cytoplasmic Ca(2+) levels back to baseline after neuronal activation, and thereby contributes to modulate synaptic plasticity, learning and memory. Plays a role in regulating urinary Ca(2+) and Na(+) excretion. This chain is Sodium/calcium exchanger 2 (SLC8A2), found in Homo sapiens (Human).